The following is a 553-amino-acid chain: Pumilio domain-containing protein 5 (553 aa).

Pumilio repeat units follow at residues 146–184 (DVVSNGSLIDFAMDRTGVKFLERHFPEDHDNEMHFVLFD), 185–223 (KLTEQGAVFTSLCRSAAGNFIIQKFVEHATLDEQERLVR), 224–260 (KMCDNGLIEMCLDKFACRVVQMSIQKFDVSIAMKLVE), 261–296 (KISSLDFLPLCTDQCAIHVLQKVVKLLPISAWSFFV), 297–335 (KFLCRDDNLMTVCQDKYGCRLVQQTIDKLSDNPKLHCFN), 347–384 (SVARNCFRLSSNEFANYVVQYVIKSSGVMEMYRDTIIE), 386–421 (CLLRNILSMSQDKYASHVVEGAFLFAPPLLLSEMMD), and 432–472 (ETNR…KMVA). Positions 499-514 (FSSGKKIIESLQKLNV) are RNA-binding.

In terms of tissue distribution, detected in differentiating oocytes with highest levels observed in developing ooctyes in the distal portion of the proximal gonad.

The protein resides in the cytoplasm. The protein localises to the P-body. Functionally, RNA-binding protein that binds to the consensus sequence 5'-CUCUGUAUCUUGU-3' in mRNA 3'-UTRs and modulates mRNA expression and stability. Functions redundantly with puf-6 and puf-7 in oocyte formation and organization, early embryonic cell divisions, and repression of expression of glp-1 and other maternal mRNAs in late oogenesis. In Caenorhabditis elegans, this protein is Pumilio domain-containing protein 5.